Consider the following 154-residue polypeptide: D-aminoacyl-tRNA deacylase (154 aa).

Residues 137 to 138 (GP) carry the Gly-cisPro motif, important for rejection of L-amino acids motif.

The protein belongs to the DTD family. In terms of assembly, homodimer.

It is found in the cytoplasm. The catalysed reaction is glycyl-tRNA(Ala) + H2O = tRNA(Ala) + glycine + H(+). It catalyses the reaction a D-aminoacyl-tRNA + H2O = a tRNA + a D-alpha-amino acid + H(+). An aminoacyl-tRNA editing enzyme that deacylates mischarged D-aminoacyl-tRNAs. Also deacylates mischarged glycyl-tRNA(Ala), protecting cells against glycine mischarging by AlaRS. Acts via tRNA-based rather than protein-based catalysis; rejects L-amino acids rather than detecting D-amino acids in the active site. By recycling D-aminoacyl-tRNA to D-amino acids and free tRNA molecules, this enzyme counteracts the toxicity associated with the formation of D-aminoacyl-tRNA entities in vivo and helps enforce protein L-homochirality. This is D-aminoacyl-tRNA deacylase from Thermomicrobium roseum (strain ATCC 27502 / DSM 5159 / P-2).